Reading from the N-terminus, the 360-residue chain is Photosystem II protein D1 (360 aa).

The next 3 membrane-spanning stretches (helical) occupy residues 29 to 46 (YIGWFGVLMIPTLLTATT), 118 to 133 (HFLLGVASYMGREWEL), and 142 to 156 (WIFVAFSAPVAAASA). Residue His-118 participates in chlorophyll a binding. Tyr-126 provides a ligand contact to pheophytin a. 2 residues coordinate [CaMn4O5] cluster: Asp-170 and Glu-189. A helical transmembrane segment spans residues 197–218 (FHMAGVAGVFGGSLFSAMHGSL). His-198 is a binding site for chlorophyll a. A quinone contacts are provided by residues His-215 and 264-265 (SF). A Fe cation-binding site is contributed by His-215. His-272 is a Fe cation binding site. The chain crosses the membrane as a helical span at residues 274–288 (FLAAWPVVRIWLTAL). [CaMn4O5] cluster contacts are provided by His-332, Glu-333, Asp-342, and Ala-344. Positions 345–360 (AGEVLPVAVSAPAVHA) are excised as a propeptide.

The protein belongs to the reaction center PufL/M/PsbA/D family. In terms of assembly, PSII is composed of 1 copy each of membrane proteins PsbA, PsbB, PsbC, PsbD, PsbE, PsbF, PsbH, PsbI, PsbJ, PsbK, PsbL, PsbM, PsbT, PsbX, PsbY, PsbZ, Psb30/Ycf12, at least 3 peripheral proteins of the oxygen-evolving complex and a large number of cofactors. It forms dimeric complexes. The D1/D2 heterodimer binds P680, chlorophylls that are the primary electron donor of PSII, and subsequent electron acceptors. It shares a non-heme iron and each subunit binds pheophytin, quinone, additional chlorophylls, carotenoids and lipids. D1 provides most of the ligands for the Mn4-Ca-O5 cluster of the oxygen-evolving complex (OEC). There is also a Cl(-1) ion associated with D1 and D2, which is required for oxygen evolution. The PSII complex binds additional chlorophylls, carotenoids and specific lipids. is required as a cofactor. Post-translationally, tyr-161 forms a radical intermediate that is referred to as redox-active TyrZ, YZ or Y-Z. C-terminally processed by CTPA; processing is essential to allow assembly of the oxygen-evolving complex and thus photosynthetic growth.

The protein resides in the plastid. It is found in the chloroplast thylakoid membrane. The catalysed reaction is 2 a plastoquinone + 4 hnu + 2 H2O = 2 a plastoquinol + O2. Its function is as follows. Photosystem II (PSII) is a light-driven water:plastoquinone oxidoreductase that uses light energy to abstract electrons from H(2)O, generating O(2) and a proton gradient subsequently used for ATP formation. It consists of a core antenna complex that captures photons, and an electron transfer chain that converts photonic excitation into a charge separation. The D1/D2 (PsbA/PsbD) reaction center heterodimer binds P680, the primary electron donor of PSII as well as several subsequent electron acceptors. The sequence is that of Photosystem II protein D1 from Bumilleriopsis filiformis (Yellow-green alga).